Reading from the N-terminus, the 1088-residue chain is MGKYNLILSEYLSFIYNSQSAVQIPIYYSSNSELENRCIEFHSKCLENSKNGLPLKKLFVEYSDVIENATLLSILSYSYDKYNAVERKLVKYAKGKPLEADLTVNELDYENNKITSELFPTAEEYTDSLMDPAILTSLSSNLNAVMFWLEKHENDAAEKLKIYKRRLDLFTIVASTVNKYGVPRHNEKYRYEYEVMKDKPYYLVTWANSSIEMLMSVFSHEDYLIARELIVLSYSNRSTLAKLVSSPMSILVALVDINGTFITNEELELEFSNKYVRAIVPDQTFDELKQMLDNMRKAGLTDIPKMIQDWLADCSIEKFPLMAKIYSWSFHVGFRKQKMLDAALDQLKTEYTEDIDDEMYREYTMLIRDEVVKMLKEPVKHDDHLLQDSELAGLLSMSSASNGESRQLKFGRKTIFSTKKNMHVMDDMANGRYTPGIIPPVNVDKPIPLGRRDVPGRRTRIIFILPYEYFIAQHAVVEKMLIYAKHTREYAEFYSQSNQLLSYGDVTRFLSNNSMVLYTDVSQWDSSQHNTQPFRKGIIMGLDMLANMTNDARVIQTLNLYKQTQINLMDSYVQIPDGDVIKKIQYGAVASGEKQTKAANSIANLALIKTVLSRISNKYSFATKIIRVDGDDNYAVLQFNTEVTKQMVQDVSNDVRETYARMNAKVKALVSTVGIEIAKRYIAGGKIFFRAGINLLNNEKRGQSTQWDQAAVLYSNYIVNRLRGFETDREFILTKIMQMTSVAITGSLRLFPSERVLTTNSTFKVFDSEDFIIEYGTTDDEVYIQRAFMSLSSQKSGIADEIAASSTFKNYVSRLSEQLLFSKNNIVSKGIALTEKAKLNSYAPISLEKRRAQISALLTMLQKPVTFKSSKITINDILRDIKPFFTVSEAHLPIQYQKFMPTLPDNVQYIIQCIGSRTYQIEDDGSKSAISRLISKYSVYKPSIEELYKVISLHENEIQLYLISLGIPKIDADTYVGSKIYSQDKYRILESYVYNLLSINYGCYQLFDFNSPDLEKLIRIPFKGKIPAVTFILHLYAKLEVINHAIKNGSWISLFCNYPKSEMIKLWKKMWNITSLRSPYTNANFFQD.

One can recognise a RdRp catalytic domain in the interval 501-687; that stretch reads LSYGDVTRFL…AKRYIAGGKI (187 aa).

Belongs to the reoviridae RNA-directed RNA polymerase family. As to quaternary structure, interacts with VP3 (Potential). Interacts with VP2; this interaction activates VP1. Interacts with NSP5; this interaction is probably necessary for the formation of functional virus factories. Interacts with NSP2; this interaction is weak. Mg(2+) serves as cofactor.

It is found in the virion. The catalysed reaction is RNA(n) + a ribonucleoside 5'-triphosphate = RNA(n+1) + diphosphate. RNA-directed RNA polymerase that is involved in both transcription and genome replication. Together with VP3 capping enzyme, forms an enzyme complex positioned near the channels situated at each of the five-fold vertices of the core. Following infection, the outermost layer of the virus is lost, leaving a double-layered particle (DLP) made up of the core and VP6 shell. VP1 then catalyzes the transcription of fully conservative plus-strand genomic RNAs that are extruded through the DLP's channels into the cytoplasm where they function as mRNAs for translation of viral proteins. One copy of each of the viral (+)RNAs is also recruited during core assembly, together with newly synthesized polymerase complexes and VP2. The polymerase of these novo-formed particles catalyzes the synthesis of complementary minus-strands leading to dsRNA formation. To do so, the polymerase specifically recognizes and binds 4 bases 5'-UGUG-3' in the conserved 3'-sequence of plus-strand RNA templates. VP2 presumably activates the autoinhibited VP1-RNA complex to coordinate packaging and genome replication. Once dsRNA synthesis is complete, the polymerase switches to the transcriptional mode, thus providing secondary transcription. This Bos taurus (Bovine) protein is RNA-directed RNA polymerase.